The primary structure comprises 1252 residues: DNA-directed RNA polymerase subunit beta (1252 aa).

Belongs to the RNA polymerase beta chain family. The RNAP catalytic core consists of 2 alpha, 1 beta, 1 beta' and 1 omega subunit. When a sigma factor is associated with the core the holoenzyme is formed, which can initiate transcription.

The enzyme catalyses RNA(n) + a ribonucleoside 5'-triphosphate = RNA(n+1) + diphosphate. Its function is as follows. DNA-dependent RNA polymerase catalyzes the transcription of DNA into RNA using the four ribonucleoside triphosphates as substrates. This is DNA-directed RNA polymerase subunit beta from Chlamydia pneumoniae (Chlamydophila pneumoniae).